The chain runs to 250 residues: 3-deoxy-manno-octulosonate cytidylyltransferase (250 aa).

Belongs to the KdsB family.

Its subcellular location is the cytoplasm. It carries out the reaction 3-deoxy-alpha-D-manno-oct-2-ulosonate + CTP = CMP-3-deoxy-beta-D-manno-octulosonate + diphosphate. The protein operates within nucleotide-sugar biosynthesis; CMP-3-deoxy-D-manno-octulosonate biosynthesis; CMP-3-deoxy-D-manno-octulosonate from 3-deoxy-D-manno-octulosonate and CTP: step 1/1. Its pathway is bacterial outer membrane biogenesis; lipopolysaccharide biosynthesis. Its function is as follows. Activates KDO (a required 8-carbon sugar) for incorporation into bacterial lipopolysaccharide in Gram-negative bacteria. The chain is 3-deoxy-manno-octulosonate cytidylyltransferase from Pectobacterium carotovorum subsp. carotovorum (strain PC1).